A 468-amino-acid polypeptide reads, in one-letter code: PE family protein PE3 (468 aa).

The PE domain maps to 1-92; it reads MSYVIAAPEM…AGAAYAQAEA (92 aa). Residues 154–375 enclose the PE-PPE domain; that stretch reads PVAQYTPEQW…DLRVLVDLGY (222 aa).

It belongs to the mycobacterial PE family.

Its subcellular location is the secreted. It localises to the cell wall. Functionally, plays significant roles in mycobacterial persistence during infection and modulates host immune response. This Mycobacterium tuberculosis (strain ATCC 25618 / H37Rv) protein is PE family protein PE3.